Reading from the N-terminus, the 136-residue chain is Large ribosomal subunit protein uL22 (136 aa).

The protein belongs to the universal ribosomal protein uL22 family. As to quaternary structure, part of the 50S ribosomal subunit.

This protein binds specifically to 23S rRNA; its binding is stimulated by other ribosomal proteins, e.g. L4, L17, and L20. It is important during the early stages of 50S assembly. It makes multiple contacts with different domains of the 23S rRNA in the assembled 50S subunit and ribosome. Its function is as follows. The globular domain of the protein is located near the polypeptide exit tunnel on the outside of the subunit, while an extended beta-hairpin is found that lines the wall of the exit tunnel in the center of the 70S ribosome. This chain is Large ribosomal subunit protein uL22, found in Bacteroides fragilis (strain ATCC 25285 / DSM 2151 / CCUG 4856 / JCM 11019 / LMG 10263 / NCTC 9343 / Onslow / VPI 2553 / EN-2).